A 798-amino-acid chain; its full sequence is Gelsolin (798 aa).

Positions 1-28 (MDASGAATMAVLSSLLVFLALSSSLCSA) are cleaved as a signal peptide. The actin-severing stretch occupies residues 57–181 (RVMHPSFANA…YEQGGVGTGF (125 aa)). The Gelsolin-like 1 repeat unit spans residues 78 to 131 (ENFEPVIYPKTNYGKFYTGDSFIVLNTIENKKDKKLSWDVHFWLGLETSTDEAG). Tyrosine 90 carries the post-translational modification Phosphotyrosine; by SRC. The tract at residues 128 to 131 (DEAG) is actin-actin interfilament contact point. A 1,2-diacyl-sn-glycero-3-phospho-(1D-myo-inositol-4,5-bisphosphate) is bound by residues 167–174 (KNGIRYEQ) and 193–201 (RLFQVKGKR). Gelsolin-like repeat units follow at residues 203–243 (VRVR…VEKL), 322–365 (LKVD…KEKT), 474–524 (IVVS…AARK), and 583–625 (VHAS…FEKQ). Residues 451–792 (MPDHGQNVIE…SYEDMKQLVI (342 aa)) are actin-binding, Ca-sensitive. Aspartate 599 is a binding site for Ca(2+). Tyrosine 612 carries the post-translational modification Phosphotyrosine; by SRC. Residue glutamate 623 coordinates Ca(2+). Position 662 is a phosphotyrosine; by SRC (tyrosine 662). One copy of the Gelsolin-like 6 repeat lies at 689-730 (LKVEEVAQYEQEDLDSDDIMLLDAGDEIYLWVGYGVSEEENG). 3 residues coordinate Ca(2+): aspartate 705, aspartate 706, and glutamate 728.

The protein belongs to the villin/gelsolin family. As to quaternary structure, binds to actin and to fibronectin. As to expression, isoform 1 and isoform 2 are ubiquitously expressed in early embryo. Isoform 1 is expressed in the fat body, and is abundant in hemolymph. Isoform 2 is expressed in parts of the gut.

It is found in the cytoplasm. It localises to the cytoskeleton. The protein localises to the secreted. Functionally, calcium-regulated, actin-modulating protein that binds to the plus (or barbed) ends of actin monomers or filaments, preventing monomer exchange (end-blocking or capping). It can promote the assembly of monomers into filaments (nucleation) as well as sever filaments already formed. This chain is Gelsolin (Gel), found in Drosophila melanogaster (Fruit fly).